Here is an 800-residue protein sequence, read N- to C-terminus: Nuclear cap-binding protein subunit 1 (800 aa).

The interval 1 to 26 (MSRRRAHDTEDEGYDHRRNKRRRVSE) is disordered. A Phosphothreonine modification is found at Thr9. The region spanning 31 to 243 (EDRLESLILR…CLWAQIRKLR (213 aa)) is the MIF4G domain. The interval 669–704 (LSKADSSSSESDEDAPTKRKKPITHADKPSEEAVER) is disordered. A compositionally biased stretch (basic and acidic residues) spans 692-704 (THADKPSEEAVER).

This sequence belongs to the NCBP1 family. As to quaternary structure, component of the nuclear cap-binding complex (CBC), a heterodimer composed of Cbp80 and Cbp20 that interacts with m7GpppG-capped RNA.

It is found in the nucleus. Component of the cap-binding complex (CBC), which binds cotranscriptionally to the 5'-cap of pre-mRNAs and is involved in various processes such as pre-mRNA splicing and RNA-mediated gene silencing (RNAi). The CBC complex is involved in miRNA-mediated RNA interference via its interaction with Ars2 and is required for primary microRNAs (miRNAs) processing. Also involved in innate immunity via the short interfering RNAs (siRNAs) processing machinery by restricting the viral RNA production. In the CBC complex, Cbp80 does not bind directly capped RNAs (m7GpppG-capped RNA) but is required to stabilize the movement of the N-terminal loop of Cbp20 and lock the CBC into a high affinity cap-binding state with the cap structure. The polypeptide is Nuclear cap-binding protein subunit 1 (Cbp80) (Drosophila persimilis (Fruit fly)).